A 221-amino-acid polypeptide reads, in one-letter code: Beta-phosphoglucomutase (221 aa).

Residue D8 is the Nucleophile of the active site. Positions 8 and 10 each coordinate Mg(2+). D8 carries the 4-aspartylphosphate modification. Catalysis depends on D10, which acts as the Proton donor/acceptor. 7 residues coordinate beta-D-glucose 6-phosphate: D10, G46, V47, R49, S116, K117, and N118. D170 contacts Mg(2+).

It belongs to the HAD-like hydrolase superfamily. CbbY/CbbZ/Gph/YieH family. Monomer. Mg(2+) serves as cofactor. Autophosphorylated.

The protein localises to the cytoplasm. It catalyses the reaction beta-D-glucose 1-phosphate = beta-D-glucose 6-phosphate. Activated by phosphorylation. Competitively inhibited by alpha-D-galactose-1-phosphate. Catalyzes the interconversion of D-glucose 1-phosphate (G1P) and D-glucose 6-phosphate (G6P), forming beta-D-glucose 1,6-(bis)phosphate (beta-G16P) as an intermediate. The beta-phosphoglucomutase (Beta-PGM) acts on the beta-C(1) anomer of G1P. Glucose or lactose are used in preference to maltose, which is only utilized after glucose or lactose has been exhausted. It plays a key role in the regulation of the flow of carbohydrate intermediates in glycolysis and the formation of the sugar nucleotide UDP-glucose. This is Beta-phosphoglucomutase from Lactococcus lactis subsp. lactis (strain IL1403) (Streptococcus lactis).